Reading from the N-terminus, the 126-residue chain is Small ribosomal subunit protein uS12 (126 aa).

The tract at residues 1 to 23 is disordered; sequence MPTISQLVRKGRKTVASKSTAPA. Position 89 is a 3-methylthioaspartic acid (aspartate 89).

Belongs to the universal ribosomal protein uS12 family. Part of the 30S ribosomal subunit. Contacts proteins S8 and S17. May interact with IF1 in the 30S initiation complex.

Its function is as follows. With S4 and S5 plays an important role in translational accuracy. Functionally, interacts with and stabilizes bases of the 16S rRNA that are involved in tRNA selection in the A site and with the mRNA backbone. Located at the interface of the 30S and 50S subunits, it traverses the body of the 30S subunit contacting proteins on the other side and probably holding the rRNA structure together. The combined cluster of proteins S8, S12 and S17 appears to hold together the shoulder and platform of the 30S subunit. The protein is Small ribosomal subunit protein uS12 of Clostridium perfringens (strain ATCC 13124 / DSM 756 / JCM 1290 / NCIMB 6125 / NCTC 8237 / Type A).